A 98-amino-acid chain; its full sequence is Ubiquitin-related modifier 1 (98 aa).

A 1-thioglycine modification is found at G98. A Glycyl lysine isopeptide (Gly-Lys) (interchain with K-? in acceptor proteins) cross-link involves residue G98.

Belongs to the URM1 family. In terms of processing, C-terminal thiocarboxylation occurs in 2 steps, it is first acyl-adenylated (-COAMP) via the hesA/moeB/thiF part of UBA4, then thiocarboxylated (-COSH) via the rhodanese domain of UBA4.

Its subcellular location is the cytoplasm. It participates in tRNA modification; 5-methoxycarbonylmethyl-2-thiouridine-tRNA biosynthesis. Acts as a sulfur carrier required for 2-thiolation of mcm(5)S(2)U at tRNA wobble positions of cytosolic tRNA(Lys), tRNA(Glu) and tRNA(Gln). Serves as sulfur donor in tRNA 2-thiolation reaction by being thiocarboxylated (-COSH) at its C-terminus by the MOCS3 homolog UBA4. The sulfur is then transferred to tRNA to form 2-thiolation of mcm(5)S(2)U. Prior mcm(5) tRNA modification by the elongator complex is required for 2-thiolation. Also acts as a ubiquitin-like protein (UBL) that is covalently conjugated via an isopeptide bond to lysine residues of target proteins such as AHP1. The thiocarboxylated form serves as substrate for conjugation and oxidative stress specifically induces the formation of UBL-protein conjugates. The polypeptide is Ubiquitin-related modifier 1 (Candida glabrata (strain ATCC 2001 / BCRC 20586 / JCM 3761 / NBRC 0622 / NRRL Y-65 / CBS 138) (Yeast)).